We begin with the raw amino-acid sequence, 352 residues long: Biotin synthase (352 aa).

The Radical SAM core domain occupies 44–262 (NRVQVSTLLS…LAVARILMPQ (219 aa)). Positions 59, 63, and 66 each coordinate [4Fe-4S] cluster. Residues cysteine 103, cysteine 134, cysteine 194, and arginine 266 each coordinate [2Fe-2S] cluster.

It belongs to the radical SAM superfamily. Biotin synthase family. In terms of assembly, homodimer. It depends on [4Fe-4S] cluster as a cofactor. The cofactor is [2Fe-2S] cluster.

The enzyme catalyses (4R,5S)-dethiobiotin + (sulfur carrier)-SH + 2 reduced [2Fe-2S]-[ferredoxin] + 2 S-adenosyl-L-methionine = (sulfur carrier)-H + biotin + 2 5'-deoxyadenosine + 2 L-methionine + 2 oxidized [2Fe-2S]-[ferredoxin]. It functions in the pathway cofactor biosynthesis; biotin biosynthesis; biotin from 7,8-diaminononanoate: step 2/2. Its function is as follows. Catalyzes the conversion of dethiobiotin (DTB) to biotin by the insertion of a sulfur atom into dethiobiotin via a radical-based mechanism. This chain is Biotin synthase, found in Pseudomonas syringae pv. tomato (strain ATCC BAA-871 / DC3000).